A 1761-amino-acid polypeptide reads, in one-letter code: Nonribosomal peptide synthetase 6 (1761 aa).

Residues 63–468 are adenylation; that stretch reads ERAALHPEKI…GRQDQQVKLR (406 aa). Positions 600-675 constitute a Carrier 1 domain; sequence EATTEMELKL…AMAEKAKPVS (76 aa). S636 is subject to O-(pantetheine 4'-phosphoryl)serine. The segment at 712–1135 is condensation 1; it reads VEDVYPCTPL…AVLDPAEARD (424 aa). 2 Carrier domains span residues 1169–1242 and 1237–1313; these read SPNE…SNER and SASN…EEEM. O-(pantetheine 4'-phosphoryl)serine occurs at positions 1203 and 1274. The segment at 1354–1677 is condensation 2; the sequence is IYPTRPLQQL…DKVQWFDTVV (324 aa).

It belongs to the NRP synthetase family.

It participates in siderophore biosynthesis. NRPS involved in extracellular coprogen-type siderophores biosynthesis including coprogen, neocoprogen I and neocoprogen II. The role of extracellular siderophores in fungal virulence to plants is to supply iron to the fungus during plant infection, but not to act as phytotoxins, depriving their hosts of iron. This Cochliobolus miyabeanus (Brown spot disease fungus) protein is Nonribosomal peptide synthetase 6.